A 119-amino-acid chain; its full sequence is Mitochondrial coiled-coil domain protein 1 (119 aa).

The transit peptide at 1 to 24 directs the protein to the mitochondrion; sequence MVLPLPWLSRYHFLRLLLPSWSLA. Residues 25 to 65 form a disordered region; it reads PQGSHGCCSQNPKASMEEQTSSRGNGKMTSPPRGPGTHRTA. Positions 31 to 52 are enriched in polar residues; it reads CCSQNPKASMEEQTSSRGNGKM. Positions 62–116 form a coiled coil; that stretch reads HRTAELARAEELLEQQLELYQALLEGQEGAWEAQALVLKIQKLKEQMRRHQESLG.

As to expression, widely expressed. Expressed in adult and fetal liver, kidney and lung. Expressed in fetal brain. Weakly expressed in fetal spleen.

The protein resides in the mitochondrion. The protein is Mitochondrial coiled-coil domain protein 1 (MCCD1) of Homo sapiens (Human).